The chain runs to 471 residues: Argininosuccinate lyase (471 aa).

It belongs to the lyase 1 family. Argininosuccinate lyase subfamily.

Its subcellular location is the cytoplasm. The catalysed reaction is 2-(N(omega)-L-arginino)succinate = fumarate + L-arginine. It functions in the pathway amino-acid biosynthesis; L-arginine biosynthesis; L-arginine from L-ornithine and carbamoyl phosphate: step 3/3. In Acidiphilium cryptum (strain JF-5), this protein is Argininosuccinate lyase.